The sequence spans 261 residues: MKVHSSVLIEGEVEIPEDVEIGAYTVIQGNVKIGKGTKIGNRVTIKGNVTIGENCKIFDGAVIGEAPQHLKYEGEETSVEIGNNVIIREYVTIHRGTKLDKGKTVVGDNVMLMAYSHVAHDCVVGNNVIMANCATLGGHVVVGDYALIGGLSAVHQWARVGEHAMVGGLTGVSLDIPPYTVASGQHAKLYGINIIGLRRRGFPEEVIKAISKAYRIIFRSPLPRQKAPEIVFQELGQYEEVRKMVEFIKSSKRGVARHHKD.

Belongs to the transferase hexapeptide repeat family. LpxA subfamily. As to quaternary structure, homotrimer.

The protein localises to the cytoplasm. It catalyses the reaction a (3R)-hydroxyacyl-[ACP] + UDP-N-acetyl-alpha-D-glucosamine = a UDP-3-O-[(3R)-3-hydroxyacyl]-N-acetyl-alpha-D-glucosamine + holo-[ACP]. It functions in the pathway glycolipid biosynthesis; lipid IV(A) biosynthesis; lipid IV(A) from (3R)-3-hydroxytetradecanoyl-[acyl-carrier-protein] and UDP-N-acetyl-alpha-D-glucosamine: step 1/6. Functionally, involved in the biosynthesis of lipid A, a phosphorylated glycolipid that anchors the lipopolysaccharide to the outer membrane of the cell. The protein is Acyl-[acyl-carrier-protein]--UDP-N-acetylglucosamine O-acyltransferase of Aquifex aeolicus (strain VF5).